A 158-amino-acid polypeptide reads, in one-letter code: Transcription elongation factor GreA (158 aa).

Residues 1–26 (MNKVPLTEKGAQQLREELQELKTVVR) adopt a coiled-coil conformation.

This sequence belongs to the GreA/GreB family.

In terms of biological role, necessary for efficient RNA polymerase transcription elongation past template-encoded arresting sites. The arresting sites in DNA have the property of trapping a certain fraction of elongating RNA polymerases that pass through, resulting in locked ternary complexes. Cleavage of the nascent transcript by cleavage factors such as GreA or GreB allows the resumption of elongation from the new 3'terminus. GreA releases sequences of 2 to 3 nucleotides. In Nitrosococcus oceani (strain ATCC 19707 / BCRC 17464 / JCM 30415 / NCIMB 11848 / C-107), this protein is Transcription elongation factor GreA.